Consider the following 195-residue polypeptide: Phosphoheptose isomerase (195 aa).

The region spanning 36–195 is the SIS domain; the sequence is LAHCLLSDGK…DLVDHQLFGE (160 aa). 51-53 lines the substrate pocket; that stretch reads NGG. Positions 60 and 64 each coordinate Zn(2+). Residues Glu-64, 93-94, 119-121, Ser-124, and Gln-174 contribute to the substrate site; these read ND and STS. Zn(2+) is bound by residues Gln-174 and His-182.

It belongs to the SIS family. GmhA subfamily. As to quaternary structure, homotetramer. Zn(2+) is required as a cofactor.

Its subcellular location is the cytoplasm. The enzyme catalyses 2 D-sedoheptulose 7-phosphate = D-glycero-alpha-D-manno-heptose 7-phosphate + D-glycero-beta-D-manno-heptose 7-phosphate. Its pathway is carbohydrate biosynthesis; D-glycero-D-manno-heptose 7-phosphate biosynthesis; D-glycero-alpha-D-manno-heptose 7-phosphate and D-glycero-beta-D-manno-heptose 7-phosphate from sedoheptulose 7-phosphate: step 1/1. Its function is as follows. Catalyzes the isomerization of sedoheptulose 7-phosphate in D-glycero-D-manno-heptose 7-phosphate. In Methylococcus capsulatus (strain ATCC 33009 / NCIMB 11132 / Bath), this protein is Phosphoheptose isomerase.